We begin with the raw amino-acid sequence, 227 residues long: Cytochrome c oxidase subunit 2 (227 aa).

The Mitochondrial intermembrane portion of the chain corresponds to 1 to 14; it reads MAYPMQLGFQDATS. The helical transmembrane segment at 15-45 threads the bilayer; the sequence is PIMEELLHFHDHTLMIVFLISSLVLYIISLM. Residues 46–59 are Mitochondrial matrix-facing; the sequence is LTTKLTHTSTMDAQ. Residues 60 to 87 traverse the membrane as a helical segment; that stretch reads EVETIWTILPAIILILIALPSLRILYMM. The Mitochondrial intermembrane segment spans residues 88–227; sequence DEINNPSLTV…YFEKWSASML (140 aa). Residues His161, Cys196, Glu198, Cys200, His204, and Met207 each contribute to the Cu cation site. Glu198 is a Mg(2+) binding site. Tyr218 carries the phosphotyrosine modification.

The protein belongs to the cytochrome c oxidase subunit 2 family. In terms of assembly, component of the cytochrome c oxidase (complex IV, CIV), a multisubunit enzyme composed of 14 subunits. The complex is composed of a catalytic core of 3 subunits MT-CO1, MT-CO2 and MT-CO3, encoded in the mitochondrial DNA, and 11 supernumerary subunits COX4I, COX5A, COX5B, COX6A, COX6B, COX6C, COX7A, COX7B, COX7C, COX8 and NDUFA4, which are encoded in the nuclear genome. The complex exists as a monomer or a dimer and forms supercomplexes (SCs) in the inner mitochondrial membrane with NADH-ubiquinone oxidoreductase (complex I, CI) and ubiquinol-cytochrome c oxidoreductase (cytochrome b-c1 complex, complex III, CIII), resulting in different assemblies (supercomplex SCI(1)III(2)IV(1) and megacomplex MCI(2)III(2)IV(2)). Found in a complex with TMEM177, COA6, COX18, COX20, SCO1 and SCO2. Interacts with TMEM177 in a COX20-dependent manner. Interacts with COX20. Interacts with COX16. It depends on Cu cation as a cofactor.

Its subcellular location is the mitochondrion inner membrane. The catalysed reaction is 4 Fe(II)-[cytochrome c] + O2 + 8 H(+)(in) = 4 Fe(III)-[cytochrome c] + 2 H2O + 4 H(+)(out). In terms of biological role, component of the cytochrome c oxidase, the last enzyme in the mitochondrial electron transport chain which drives oxidative phosphorylation. The respiratory chain contains 3 multisubunit complexes succinate dehydrogenase (complex II, CII), ubiquinol-cytochrome c oxidoreductase (cytochrome b-c1 complex, complex III, CIII) and cytochrome c oxidase (complex IV, CIV), that cooperate to transfer electrons derived from NADH and succinate to molecular oxygen, creating an electrochemical gradient over the inner membrane that drives transmembrane transport and the ATP synthase. Cytochrome c oxidase is the component of the respiratory chain that catalyzes the reduction of oxygen to water. Electrons originating from reduced cytochrome c in the intermembrane space (IMS) are transferred via the dinuclear copper A center (CU(A)) of subunit 2 and heme A of subunit 1 to the active site in subunit 1, a binuclear center (BNC) formed by heme A3 and copper B (CU(B)). The BNC reduces molecular oxygen to 2 water molecules using 4 electrons from cytochrome c in the IMS and 4 protons from the mitochondrial matrix. This Bison bonasus (European bison) protein is Cytochrome c oxidase subunit 2 (MT-CO2).